The chain runs to 206 residues: LexA repressor (206 aa).

The H-T-H motif DNA-binding region spans 28–48; the sequence is VREIGEAVGLASSSTVHGHLA. Active-site for autocatalytic cleavage activity residues include S128 and K166.

It belongs to the peptidase S24 family. Homodimer.

It carries out the reaction Hydrolysis of Ala-|-Gly bond in repressor LexA.. In terms of biological role, represses a number of genes involved in the response to DNA damage (SOS response), including recA and lexA. In the presence of single-stranded DNA, RecA interacts with LexA causing an autocatalytic cleavage which disrupts the DNA-binding part of LexA, leading to derepression of the SOS regulon and eventually DNA repair. The sequence is that of LexA repressor from Bacillus pumilus (strain SAFR-032).